The sequence spans 237 residues: Small ribosomal subunit protein uS3 (237 aa).

One can recognise a KH type-2 domain in the interval 17–86 (VERHLGHELK…SPQIEVQQVD (70 aa)).

The protein belongs to the universal ribosomal protein uS3 family. Part of the 30S ribosomal subunit.

Binds the lower part of the 30S subunit head. The sequence is that of Small ribosomal subunit protein uS3 from Methanospirillum hungatei JF-1 (strain ATCC 27890 / DSM 864 / NBRC 100397 / JF-1).